We begin with the raw amino-acid sequence, 35 residues long: Conotoxin Cal6.1g (35 aa).

The propeptide occupies 1 to 8 (GLSRPSKR). 3 cysteine pairs are disulfide-bonded: cysteine 9/cysteine 25, cysteine 16/cysteine 29, and cysteine 24/cysteine 34.

It belongs to the conotoxin O1 superfamily. Expressed by the venom duct.

The protein localises to the secreted. Functionally, probable neurotoxin with unknown target. Possibly targets ion channels. The chain is Conotoxin Cal6.1g from Californiconus californicus (California cone).